We begin with the raw amino-acid sequence, 420 residues long: UDP-N-acetylglucosamine 1-carboxyvinyltransferase (420 aa).

Lysine 22–asparagine 23 serves as a coordination point for phosphoenolpyruvate. Residue arginine 93 coordinates UDP-N-acetyl-alpha-D-glucosamine. Cysteine 117 acts as the Proton donor in catalysis. 2-(S-cysteinyl)pyruvic acid O-phosphothioketal is present on cysteine 117. UDP-N-acetyl-alpha-D-glucosamine-binding residues include aspartate 307 and isoleucine 329.

This sequence belongs to the EPSP synthase family. MurA subfamily.

The protein resides in the cytoplasm. It carries out the reaction phosphoenolpyruvate + UDP-N-acetyl-alpha-D-glucosamine = UDP-N-acetyl-3-O-(1-carboxyvinyl)-alpha-D-glucosamine + phosphate. It functions in the pathway cell wall biogenesis; peptidoglycan biosynthesis. Its function is as follows. Cell wall formation. Adds enolpyruvyl to UDP-N-acetylglucosamine. The protein is UDP-N-acetylglucosamine 1-carboxyvinyltransferase of Cellvibrio japonicus (strain Ueda107) (Pseudomonas fluorescens subsp. cellulosa).